The following is a 209-amino-acid chain: Orotate phosphoribosyltransferase (209 aa).

5-phospho-alpha-D-ribose 1-diphosphate is bound by residues R96, K100, H102, and 122–130 (EDLISTGGS). S126 serves as a coordination point for orotate.

Belongs to the purine/pyrimidine phosphoribosyltransferase family. PyrE subfamily. In terms of assembly, homodimer. Requires Mg(2+) as cofactor.

The catalysed reaction is orotidine 5'-phosphate + diphosphate = orotate + 5-phospho-alpha-D-ribose 1-diphosphate. It participates in pyrimidine metabolism; UMP biosynthesis via de novo pathway; UMP from orotate: step 1/2. Catalyzes the transfer of a ribosyl phosphate group from 5-phosphoribose 1-diphosphate to orotate, leading to the formation of orotidine monophosphate (OMP). In Lactococcus lactis subsp. cremoris (strain SK11), this protein is Orotate phosphoribosyltransferase.